The following is a 329-amino-acid chain: Holliday junction branch migration complex subunit RuvB (329 aa).

The large ATPase domain (RuvB-L) stretch occupies residues M1–Y180. Residues R20, G61, K64, T65, T66, E127 to F129, R170, Y180, and R217 each bind ATP. T65 serves as a coordination point for Mg(2+). The interval S181 to G252 is small ATPAse domain (RuvB-S). Residues K255–I329 are head domain (RuvB-H). R308 and R313 together coordinate DNA.

It belongs to the RuvB family. Homohexamer. Forms an RuvA(8)-RuvB(12)-Holliday junction (HJ) complex. HJ DNA is sandwiched between 2 RuvA tetramers; dsDNA enters through RuvA and exits via RuvB. An RuvB hexamer assembles on each DNA strand where it exits the tetramer. Each RuvB hexamer is contacted by two RuvA subunits (via domain III) on 2 adjacent RuvB subunits; this complex drives branch migration. In the full resolvosome a probable DNA-RuvA(4)-RuvB(12)-RuvC(2) complex forms which resolves the HJ.

It is found in the cytoplasm. The catalysed reaction is ATP + H2O = ADP + phosphate + H(+). In terms of biological role, the RuvA-RuvB-RuvC complex processes Holliday junction (HJ) DNA during genetic recombination and DNA repair, while the RuvA-RuvB complex plays an important role in the rescue of blocked DNA replication forks via replication fork reversal (RFR). RuvA specifically binds to HJ cruciform DNA, conferring on it an open structure. The RuvB hexamer acts as an ATP-dependent pump, pulling dsDNA into and through the RuvAB complex. RuvB forms 2 homohexamers on either side of HJ DNA bound by 1 or 2 RuvA tetramers; 4 subunits per hexamer contact DNA at a time. Coordinated motions by a converter formed by DNA-disengaged RuvB subunits stimulates ATP hydrolysis and nucleotide exchange. Immobilization of the converter enables RuvB to convert the ATP-contained energy into a lever motion, pulling 2 nucleotides of DNA out of the RuvA tetramer per ATP hydrolyzed, thus driving DNA branch migration. The RuvB motors rotate together with the DNA substrate, which together with the progressing nucleotide cycle form the mechanistic basis for DNA recombination by continuous HJ branch migration. Branch migration allows RuvC to scan DNA until it finds its consensus sequence, where it cleaves and resolves cruciform DNA. This chain is Holliday junction branch migration complex subunit RuvB, found in Ehrlichia chaffeensis (strain ATCC CRL-10679 / Arkansas).